The chain runs to 483 residues: Aspartyl/glutamyl-tRNA(Asn/Gln) amidotransferase subunit B (483 aa).

This sequence belongs to the GatB/GatE family. GatB subfamily. As to quaternary structure, heterotrimer of A, B and C subunits.

The enzyme catalyses L-glutamyl-tRNA(Gln) + L-glutamine + ATP + H2O = L-glutaminyl-tRNA(Gln) + L-glutamate + ADP + phosphate + H(+). The catalysed reaction is L-aspartyl-tRNA(Asn) + L-glutamine + ATP + H2O = L-asparaginyl-tRNA(Asn) + L-glutamate + ADP + phosphate + 2 H(+). Its function is as follows. Allows the formation of correctly charged Asn-tRNA(Asn) or Gln-tRNA(Gln) through the transamidation of misacylated Asp-tRNA(Asn) or Glu-tRNA(Gln) in organisms which lack either or both of asparaginyl-tRNA or glutaminyl-tRNA synthetases. The reaction takes place in the presence of glutamine and ATP through an activated phospho-Asp-tRNA(Asn) or phospho-Glu-tRNA(Gln). This chain is Aspartyl/glutamyl-tRNA(Asn/Gln) amidotransferase subunit B, found in Rickettsia canadensis (strain McKiel).